The primary structure comprises 600 residues: Estrogen receptor (600 aa).

The tract at residues 1–189 (MTMTLHTKAS…IMESAKETRY (189 aa)) is modulating (transactivation AF-1); mediates interaction with MACROD1. O-linked (GlcNAc) serine glycosylation occurs at Ser10. The interval 35-47 (MERALGEVYVDNS) is required for interaction with NCOA1. Positions 35-179 (MERALGEVYV…LSSSSEKGNM (145 aa)) are interaction with DDX5; self-association. 2 positions are modified to phosphoserine; by CDK2: Ser109 and Ser111. At Ser123 the chain carries Phosphoserine. Residues 148–177 (DTGPPAFYRSNSDNRRQNGRERLSSSSEKG) are disordered. The span at 159–170 (SDNRRQNGRERL) shows a compositional bias: basic and acidic residues. A Phosphoserine; by CK2 modification is found at Ser172. NR C4-type zinc fingers lie at residues 190-210 (CAVC…CEGC) and 226-250 (CPAT…LRKC). A DNA-binding region (nuclear receptor) is located at residues 190–255 (CAVCNDYASG…RLRKCYEVGM (66 aa)). The interval 190–315 (CAVCNDYASG…TKKNSPALSL (126 aa)) is mediates interaction with DNTTIP2. The tract at residues 256–315 (MKGGIRKDRRGGRMLKHKRQRDDLEGRNEMGTSGDMRAANLWPSPLVIKHTKKNSPALSL) is hinge. At Arg265 the chain carries Asymmetric dimethylarginine; by PRMT1. An interaction with AKAP13 region spans residues 267 to 600 (GRMLKHKRQR…PEAEGFPNTI (334 aa)). A self-association region spans residues 269–600 (MLKHKRQRDD…PEAEGFPNTI (332 aa)). The region spanning 316–552 (TADQMVSALL…DLLLEMLDAH (237 aa)) is the NR LBD domain. Positions 316 to 600 (TADQMVSALL…PEAEGFPNTI (285 aa)) are transactivation AF-2. 2 residues coordinate 17beta-estradiol: Glu358 and Arg399. Cys452 carries S-palmitoyl cysteine lipidation. Residue His529 participates in 17beta-estradiol binding. Residue Tyr542 is modified to Phosphotyrosine; by Tyr-kinases. The tract at residues 558–581 (ASRMGVPPEEPSQSQLTTTSSTSA) is disordered. The span at 569 to 581 (SQSQLTTTSSTSA) shows a compositional bias: low complexity. The O-linked (GlcNAc) threonine glycan is linked to Thr576.

The protein belongs to the nuclear hormone receptor family. NR3 subfamily. Interacts with BCAS3. Binds DNA as a homodimer. Can form a heterodimer with ESR2. Interacts with coactivator NCOA5. Interacts with PELP1, the interaction is enhanced by 17-beta-estradiol; the interaction increases ESR1 transcriptional activity. Interacts with NCOA7; the interaction is ligand-inducible. Interacts with AKAP13, CUEDC2, HEXIM1, KDM5A, MAP1S, SMARD1, and UBE1C. Interacts with MUC1; the interaction is stimulated by 7 beta-estradiol (E2) and enhances ESR1-mediated transcription. Interacts with DNTTIP2, and UIMC1. Interacts with KMT2D/MLL2. Interacts with ATAD2; the interaction is enhanced by estradiol. Interacts with KIF18A and LDB1. Interacts with RLIM (via its C-terminus). Interacts with MACROD1. Interacts with SH2D4A and PLCG. Interacts with SH2D4A; the interaction blocks binding to PLCG and inhibits estrogen-induced cell proliferation. Interacts with DYNLL1. Interacts with CCDC62; the interaction requires estradiol and appears to enhance the transcription of target genes. Interacts with NR2C1; the interaction prevents homodimerization of ESR1 and suppresses its transcriptional activity and cell growth. Interacts with DNAAF4. Interacts with PRMT2. Interacts with RBFOX2. Interacts with EP300; the interaction is estrogen-dependent and enhanced by CITED1. Interacts with CITED1; the interaction is estrogen-dependent. Interacts with FAM120B, FOXL2, PHB2 and SLC30A9. Interacts with coactivators NCOA3 and NCOA6. Interacts with STK3/MST2 only in the presence of SAV1 and vice-versa. Binds to CSNK1D. Interacts with NCOA2; NCOA2 can interact with ESR1 AF-1 and AF-2 domains simultaneously and mediate their transcriptional synergy. Interacts with DDX5. Interacts with NCOA1; the interaction seems to require a self-association of N-terminal and C-terminal regions. Interacts with ZNF366, DDX17, NFKB1, RELA, SP1 and SP3. Interacts with NRIP1. Interacts with GPER1; the interaction occurs in an estrogen-dependent manner. Interacts with TRIP4 (ufmylated); estrogen dependent. Interacts with LMTK3; the interaction phosphorylates ESR1 (in vitro) and protects it against proteasomal degradation. Interacts with CCAR2 (via N-terminus) in a ligand-independent manner. Interacts with ZFHX3. Interacts with SFR1 in a ligand-dependent and -independent manner. Interacts with DCAF13, LATS1 and DCAF1; regulates ESR1 ubiquitination and ubiquitin-mediated proteasomal degradation. Interacts (via DNA-binding domain) with POU4F2 (C-terminus); this interaction increases the estrogen receptor ESR1 transcriptional activity in a DNA- and ligand 17-beta-estradiol-independent manner. Interacts with ESRRB isoform 1. Interacts with UBE3A and WBP2. Interacts with GTF2B. Interacts with RBM39. In the absence of hormonal ligand, interacts with TACC1. Interacts with PI3KR1 or PI3KR2 and PTK2/FAK1. Interacts with SRC. Interacts with BAG1; the interaction is promoted in the absence of estradiol (17-beta-estradiol/E2). Interacts with and ubiquitinated by STUB1; the interaction is promoted in the absence of estradiol (17-beta-estradiol/E2). Interacts with NEDD8. In terms of processing, phosphorylated by cyclin A/CDK2 and CK1. Phosphorylation probably enhances transcriptional activity. Dephosphorylation at Ser-123 by PPP5C inhibits its transactivation activity. Phosphorylated by LMTK3 (in vitro). Ubiquitinated; regulated by LATS1 via DCAF1 it leads to ESR1 proteasomal degradation. Deubiquitinated by OTUB1. Ubiquitinated by STUB1/CHIP; in the CA1 hippocampal region following loss of endogenous circulating estradiol (17-beta-estradiol/E2). Ubiquitinated by UBR5, leading to its degradation: UBR5 specifically recognizes and binds ligand-bound ESR1 when it is not associated with coactivators (NCOAs). In presence of NCOAs, the UBR5-degron is not accessible, preventing its ubiquitination and degradation. Post-translationally, palmitoylated at Cys-452 by ZDHHC7 and ZDHHC21. This modification is required for plasma membrane targeting and for rapid intracellular signaling via ERK and AKT kinases and cAMP generation, but not for signaling mediated by the nuclear hormone receptor. In terms of processing, dimethylated by PRMT1 at Arg-265. The methylation may favor cytoplasmic localization. Demethylated by JMJD6 at Arg-265. In terms of tissue distribution, expressed in the CA1 region of the hippocampus, expression decreases with age (at protein level). Expressed in the uterus (at protein level).

The protein localises to the nucleus. It is found in the cytoplasm. It localises to the golgi apparatus. The protein resides in the cell membrane. Its function is as follows. Nuclear hormone receptor. The steroid hormones and their receptors are involved in the regulation of eukaryotic gene expression and affect cellular proliferation and differentiation in target tissues. Ligand-dependent nuclear transactivation involves either direct homodimer binding to a palindromic estrogen response element (ERE) sequence or association with other DNA-binding transcription factors, such as AP-1/c-Jun, c-Fos, ATF-2, Sp1 and Sp3, to mediate ERE-independent signaling. Ligand binding induces a conformational change allowing subsequent or combinatorial association with multiprotein coactivator complexes through LXXLL motifs of their respective components. Mutual transrepression occurs between the estrogen receptor (ER) and NF-kappa-B in a cell-type specific manner. Decreases NF-kappa-B DNA-binding activity and inhibits NF-kappa-B-mediated transcription from the IL6 promoter and displace RELA/p65 and associated coregulators from the promoter. Recruited to the NF-kappa-B response element of the CCL2 and IL8 promoters and can displace CREBBP. Present with NF-kappa-B components RELA/p65 and NFKB1/p50 on ERE sequences. Can also act synergistically with NF-kappa-B to activate transcription involving respective recruitment adjacent response elements; the function involves CREBBP. Can activate the transcriptional activity of TFF1. Also mediates membrane-initiated estrogen signaling involving various kinase cascades. Essential for MTA1-mediated transcriptional regulation of BRCA1 and BCAS3. Maintains neuronal survival in response to ischemic reperfusion injury when in the presence of circulating estradiol (17-beta-estradiol/E2). The polypeptide is Estrogen receptor (Esr1) (Rattus norvegicus (Rat)).